The following is a 305-amino-acid chain: Tyrosine recombinase XerD (305 aa).

The Core-binding (CB) domain occupies 9 to 94 (MQDFGYVEQF…AIRRLFQYLH (86 aa)). A Tyr recombinase domain is found at 115-299 (RLPKDISEEQ…ATERLKQIHS (185 aa)). Residues Arg-155, Lys-179, His-251, Arg-254, and His-277 contribute to the active site. The active-site O-(3'-phospho-DNA)-tyrosine intermediate is Tyr-286.

This sequence belongs to the 'phage' integrase family. XerD subfamily. As to quaternary structure, forms a cyclic heterotetrameric complex composed of two molecules of XerC and two molecules of XerD.

It is found in the cytoplasm. In terms of biological role, site-specific tyrosine recombinase, which acts by catalyzing the cutting and rejoining of the recombining DNA molecules. The XerC-XerD complex is essential to convert dimers of the bacterial chromosome into monomers to permit their segregation at cell division. It also contributes to the segregational stability of plasmids. This is Tyrosine recombinase XerD from Vibrio vulnificus (strain CMCP6).